Consider the following 434-residue polypeptide: Adenylosuccinate synthetase (434 aa).

Residues 13 to 19 (GDEGKGK) and 41 to 43 (GHT) each bind GTP. Catalysis depends on D14, which acts as the Proton acceptor. 2 residues coordinate Mg(2+): D14 and G41. Residues 14 to 17 (DEGK), 39 to 42 (NAGH), T133, R147, Q228, T243, and R307 contribute to the IMP site. The active-site Proton donor is the H42. 303–309 (STTGRKR) provides a ligand contact to substrate. GTP-binding positions include R309, 335–337 (KID), and 417–419 (STG).

This sequence belongs to the adenylosuccinate synthetase family. Homodimer. Mg(2+) serves as cofactor.

It localises to the cytoplasm. The catalysed reaction is IMP + L-aspartate + GTP = N(6)-(1,2-dicarboxyethyl)-AMP + GDP + phosphate + 2 H(+). Its pathway is purine metabolism; AMP biosynthesis via de novo pathway; AMP from IMP: step 1/2. In terms of biological role, plays an important role in the de novo pathway of purine nucleotide biosynthesis. Catalyzes the first committed step in the biosynthesis of AMP from IMP. The protein is Adenylosuccinate synthetase of Wigglesworthia glossinidia brevipalpis.